Here is a 423-residue protein sequence, read N- to C-terminus: Exodeoxyribonuclease 7 large subunit (423 aa).

It belongs to the XseA family. Heterooligomer composed of large and small subunits.

It is found in the cytoplasm. The catalysed reaction is Exonucleolytic cleavage in either 5'- to 3'- or 3'- to 5'-direction to yield nucleoside 5'-phosphates.. Its function is as follows. Bidirectionally degrades single-stranded DNA into large acid-insoluble oligonucleotides, which are then degraded further into small acid-soluble oligonucleotides. This chain is Exodeoxyribonuclease 7 large subunit, found in Natranaerobius thermophilus (strain ATCC BAA-1301 / DSM 18059 / JW/NM-WN-LF).